Consider the following 410-residue polypeptide: Acetyltransferase aurG (410 aa).

A run of 3 helical transmembrane segments spans residues 3 to 23 (LWLV…VVCF), 28 to 48 (SLVR…GLIL), and 59 to 79 (WSLV…VGLI). Residues 90–99 (TSSRGGQPNA) show a composition bias toward polar residues. The interval 90–112 (TSSRGGQPNASLDLAGRKKPPSS) is disordered. Residue asparagine 98 is glycosylated (N-linked (GlcNAc...) asparagine). 4 helical membrane passes run 157–177 (AMTL…GGDL), 219–239 (MYFS…MVGL), 300–320 (ILAT…YSYG), and 364–384 (IGYV…FFPL).

It belongs to the wax synthase family.

It localises to the membrane. It functions in the pathway polyketide biosynthesis. Functionally, acetyltransferase; part of the gene cluster that mediates the biosynthesis of aurovertins, fungal polyketides that exhibit potent inhibition of adenosine triphosphate synthase. Tha biosynthesis starts with the HR-PKS aurA that selects propionate as the starter unit; synthesizes a hexa-ene chain through the repeated functions of the KR and DH domains in the first six iterations; selectively introduces three alpha-methyl substitutions at C4, C6, and C16 using the S-adensylmethionine-dependent cMET; and shuts off KR and DH in the last three iterations to afford a 1,3,5-triketo portion that can undergo intramolecular cyclization to yield the alpha-pyrone intermediate. AurE may act as a cyclase and enhances the rate of pyrone formation and product release of aurA. The methyltransferase aurB then methylates the C17 hydroxyl group. C17 methylation is required to initiate epoxidation by the downstream monooxygenase aurC. The monooxygenase aurC and the epoxide hydrolase aurD can iteratively transform the terminal triene portion of the methylated precursor into the dioxabicyclo[3.2.1]octane scaffold of aurovertin E. Epoxidation modifications of the precursor occur in two separate steps; bis-epoxidation of the two terminal olefins takes place first, followed by another epoxidation that occurs at C7-C8 after tetrahydrofuran formation. The O-acyltransferase aurG converts aurovertin E to aurovertin A. This Calcarisporium arbuscula (Dendryphion arbuscula) protein is Acetyltransferase aurG.